The chain runs to 130 residues: S-adenosylmethionine decarboxylase proenzyme (130 aa).

The active-site Schiff-base intermediate with substrate; via pyruvic acid is the Ser64. Position 64 is a pyruvic acid (Ser); by autocatalysis (Ser64). His69 serves as the catalytic Proton acceptor; for processing activity. Cys84 functions as the Proton donor; for catalytic activity in the catalytic mechanism.

This sequence belongs to the prokaryotic AdoMetDC family. Type 1 subfamily. Heterotetramer of two alpha and two beta chains arranged as a dimer of alpha/beta heterodimers. It depends on pyruvate as a cofactor. In terms of processing, is synthesized initially as an inactive proenzyme. Formation of the active enzyme involves a self-maturation process in which the active site pyruvoyl group is generated from an internal serine residue via an autocatalytic post-translational modification. Two non-identical subunits are generated from the proenzyme in this reaction, and the pyruvate is formed at the N-terminus of the alpha chain, which is derived from the carboxyl end of the proenzyme. The post-translation cleavage follows an unusual pathway, termed non-hydrolytic serinolysis, in which the side chain hydroxyl group of the serine supplies its oxygen atom to form the C-terminus of the beta chain, while the remainder of the serine residue undergoes an oxidative deamination to produce ammonia and the pyruvoyl group blocking the N-terminus of the alpha chain.

It carries out the reaction S-adenosyl-L-methionine + H(+) = S-adenosyl 3-(methylsulfanyl)propylamine + CO2. It participates in amine and polyamine biosynthesis; S-adenosylmethioninamine biosynthesis; S-adenosylmethioninamine from S-adenosyl-L-methionine: step 1/1. Catalyzes the decarboxylation of S-adenosylmethionine to S-adenosylmethioninamine (dcAdoMet), the propylamine donor required for the synthesis of the polyamines spermine and spermidine from the diamine putrescine. The polypeptide is S-adenosylmethionine decarboxylase proenzyme (Picrophilus torridus (strain ATCC 700027 / DSM 9790 / JCM 10055 / NBRC 100828 / KAW 2/3)).